Here is a 121-residue protein sequence, read N- to C-terminus: Inner membrane protein YhaH (121 aa).

Topologically, residues 1 to 23 (MDWYLKVLKNYVGFRGRARRKEY) are periplasmic. The helical transmembrane segment at 24-44 (WMFILVNIIFTFVLGLLDKML) threads the bilayer. The Cytoplasmic portion of the chain corresponds to 45-49 (GWQRA). Residues 50-70 (GGEGILTTIYGILVFLPWWAV) form a helical membrane-spanning segment. Over 71–80 (QFRRLHDTDR) the chain is Periplasmic. The helical transmembrane segment at 81 to 101 (SAWWALLFLIPFIGWLIIIVF) threads the bilayer. The Cytoplasmic segment spans residues 102–121 (NCQAGTPGENRFGPDPKLEP).

It to E.coli YhaI.

It is found in the cell inner membrane. The chain is Inner membrane protein YhaH (yhaH) from Escherichia coli O157:H7.